A 156-amino-acid chain; its full sequence is ATP synthase subunit b (156 aa).

Residues A11–A31 traverse the membrane as a helical segment.

It belongs to the ATPase B chain family. F-type ATPases have 2 components, F(1) - the catalytic core - and F(0) - the membrane proton channel. F(1) has five subunits: alpha(3), beta(3), gamma(1), delta(1), epsilon(1). F(0) has three main subunits: a(1), b(2) and c(10-14). The alpha and beta chains form an alternating ring which encloses part of the gamma chain. F(1) is attached to F(0) by a central stalk formed by the gamma and epsilon chains, while a peripheral stalk is formed by the delta and b chains.

It is found in the cell inner membrane. Functionally, f(1)F(0) ATP synthase produces ATP from ADP in the presence of a proton or sodium gradient. F-type ATPases consist of two structural domains, F(1) containing the extramembraneous catalytic core and F(0) containing the membrane proton channel, linked together by a central stalk and a peripheral stalk. During catalysis, ATP synthesis in the catalytic domain of F(1) is coupled via a rotary mechanism of the central stalk subunits to proton translocation. Its function is as follows. Component of the F(0) channel, it forms part of the peripheral stalk, linking F(1) to F(0). This chain is ATP synthase subunit b, found in Shigella boydii serotype 18 (strain CDC 3083-94 / BS512).